Consider the following 1209-residue polypeptide: Nitric oxide synthase (1209 aa).

Residue serine 103 coordinates (6R)-L-erythro-5,6,7,8-tetrahydrobiopterin. Residue cysteine 181 participates in heme b binding. Residues glutamine 244, tryptophan 353, tyrosine 354, glutamate 358, and asparagine 363 each contribute to the L-arginine site. (6R)-L-erythro-5,6,7,8-tetrahydrobiopterin is bound by residues tryptophan 444 and phenylalanine 457. Heme b is bound at residue tyrosine 472. The calmodulin-binding stretch occupies residues 491 to 511; the sequence is VHRKFHFKQIARAVKFTSKLF. The Flavodoxin-like domain occupies 521–723; it reads ATILYATETG…QFRAWSSKIF (203 aa). Residue 527–531 participates in FMN binding; that stretch reads TETGK. The disordered stretch occupies residues 603-622; the sequence is RGDGTSDLGSGTFKTPTPKS. Residue 669–700 participates in FMN binding; sequence VFGLGSSAYPKFCHFGKTVDKILGDLGGERIL. Residues 776–1021 form the FAD-binding FR-type domain; that stretch reads KQLITCKVKE…IRRAPSFHMP (246 aa). Residues 811-822 and 954-964 contribute to the FAD site; these read YDPGDHVGVLAC and LQPRFYSISSS. NADP(+) is bound by residues 1028 to 1147 and 1128 to 1143; these read LILV…QQKL and NGHFYVCGDCKMAEEV.

It belongs to the NOS family. Heme b is required as a cofactor. Requires FAD as cofactor. The cofactor is FMN. In terms of tissue distribution, constitutively expressed at a low level in the larval fat body, hemocyte, Malpighian tubule, midgut, silk gland and adult antenna.

It carries out the reaction 2 L-arginine + 3 NADPH + 4 O2 + H(+) = 2 L-citrulline + 2 nitric oxide + 3 NADP(+) + 4 H2O. With respect to regulation, expression is dependent on and stimulated by NADPH, calcium, BH4 and calmodulin. The activity is not dependent on FAD and is not stimulated by its presence. Its function is as follows. Produces nitric oxide (NO) which is a messenger molecule with diverse functions throughout the body. Involved in the induction of immune gene expression. The protein is Nitric oxide synthase of Bombyx mori (Silk moth).